A 294-amino-acid chain; its full sequence is Protoheme IX farnesyltransferase (294 aa).

9 helical membrane-spanning segments follow: residues 24 to 44, 48 to 68, 96 to 116, 118 to 138, 145 to 165, 172 to 192, 224 to 244, 245 to 265, and 268 to 288; these read VVLL…PGWV, LIAF…AINH, ALWF…LFVN, LTAL…TGYL, NIVI…TAVT, ALLL…ALAI, VLLL…WIYL, LGAL…YFTD, and VVAM…FVFL.

The protein belongs to the UbiA prenyltransferase family. Protoheme IX farnesyltransferase subfamily.

It is found in the cell inner membrane. The catalysed reaction is heme b + (2E,6E)-farnesyl diphosphate + H2O = Fe(II)-heme o + diphosphate. The protein operates within porphyrin-containing compound metabolism; heme O biosynthesis; heme O from protoheme: step 1/1. Functionally, converts heme B (protoheme IX) to heme O by substitution of the vinyl group on carbon 2 of heme B porphyrin ring with a hydroxyethyl farnesyl side group. The chain is Protoheme IX farnesyltransferase from Legionella pneumophila (strain Corby).